The chain runs to 248 residues: Ribonuclease PH (248 aa).

Residues R86 and 124–126 (GTR) each bind phosphate.

It belongs to the RNase PH family. Homohexameric ring arranged as a trimer of dimers.

The catalysed reaction is tRNA(n+1) + phosphate = tRNA(n) + a ribonucleoside 5'-diphosphate. Functionally, phosphorolytic 3'-5' exoribonuclease that plays an important role in tRNA 3'-end maturation. Removes nucleotide residues following the 3'-CCA terminus of tRNAs; can also add nucleotides to the ends of RNA molecules by using nucleoside diphosphates as substrates, but this may not be physiologically important. Probably plays a role in initiation of 16S rRNA degradation (leading to ribosome degradation) during starvation. The sequence is that of Ribonuclease PH from Clostridium perfringens (strain ATCC 13124 / DSM 756 / JCM 1290 / NCIMB 6125 / NCTC 8237 / Type A).